We begin with the raw amino-acid sequence, 83 residues long: MAHKKAGGSSKNGRDSRGQRRGVKRFGGEKVRAGNILVRQLGTHFHPGNNVGLGRDYTLFAKIDGVVTYESSGARKQVSVYAD.

Residues 1 to 26 are disordered; sequence MAHKKAGGSSKNGRDSRGQRRGVKRF.

It belongs to the bacterial ribosomal protein bL27 family.

This is Large ribosomal subunit protein bL27 from Desulfosudis oleivorans (strain DSM 6200 / JCM 39069 / Hxd3) (Desulfococcus oleovorans).